The sequence spans 206 residues: Probable thymidylate kinase (206 aa).

7–14 (GIDGSGKS) lines the ATP pocket.

This sequence belongs to the thymidylate kinase family.

It catalyses the reaction dTMP + ATP = dTDP + ADP. The protein is Probable thymidylate kinase of Methanospirillum hungatei JF-1 (strain ATCC 27890 / DSM 864 / NBRC 100397 / JF-1).